Reading from the N-terminus, the 1340-residue chain is Serine/threonine-protein phosphatase 7 long form homolog (1340 aa).

Mn(2+) contacts are provided by D660 and H662. H722 serves as the catalytic Proton donor. H773 contributes to the Mn(2+) binding site. 4 disordered regions span residues 788–814 (QERN…DRSE), 1012–1093 (KSMD…SRTR), 1196–1218 (TDGA…SEDI), and 1266–1340 (FTNL…DMDS). A compositionally biased stretch (basic residues) spans 790–799 (RNRKRKRTQK). A compositionally biased stretch (acidic residues) spans 1018 to 1027 (EQMEVDEKDD). Residues 1049 to 1080 (GDRDMVDFSDKTENGSKEADHSETAEISKDLS) show a composition bias toward basic and acidic residues. The segment covering 1203–1213 (EPSTSKLNYSE) has biased composition (polar residues). Basic and acidic residues-rich tracts occupy residues 1266 to 1289 (FTNL…ERVI) and 1318 to 1328 (DSVDSKNKGSL).

It belongs to the PPP phosphatase family. PP-7 subfamily. Mn(2+) is required as a cofactor. As to expression, expressed in root tips, the shoot apical meristem (SAM), leaf vasculature, hydathodes and mature flowers.

Its subcellular location is the nucleus. It catalyses the reaction O-phospho-L-seryl-[protein] + H2O = L-seryl-[protein] + phosphate. It carries out the reaction O-phospho-L-threonyl-[protein] + H2O = L-threonyl-[protein] + phosphate. Maybe required to maintain cell division activity in meristematic cells. The protein is Serine/threonine-protein phosphatase 7 long form homolog of Arabidopsis thaliana (Mouse-ear cress).